Here is a 1175-residue protein sequence, read N- to C-terminus: Pyruvate carboxylase (1175 aa).

Positions 22–474 (NANKILVANR…WTTFIDDTPS (453 aa)) constitute a Biotin carboxylation domain. K140, E224, and H259 together coordinate ATP. One can recognise an ATP-grasp domain in the interval 144 to 341 (RNLAGKCNVP…IVAAQIQIAA (198 aa)). R316 is a catalytic residue. A Pyruvate carboxyltransferase domain is found at 561-828 (CLIMDTTWRD…NTGITEQNAR (268 aa)). Residues 569–573 (RDAHQ) and R642 contribute to the substrate site. Residue D570 coordinates a divalent metal cation. Positions 738, 768, and 770 each coordinate a divalent metal cation. K738 carries the N6-carboxylysine modification. Substrate is bound at residue T902. Residues 1099–1174 (KADAHNPNEV…DAGDLICKIT (76 aa)) form the Biotinyl-binding domain. Residue K1140 is modified to N6-biotinyllysine.

Biotin serves as cofactor. The cofactor is Zn(2+).

It is found in the cytoplasm. It carries out the reaction hydrogencarbonate + pyruvate + ATP = oxaloacetate + ADP + phosphate + H(+). Its pathway is carbohydrate biosynthesis; gluconeogenesis. In terms of biological role, pyruvate carboxylase catalyzes a 2-step reaction, involving the ATP-dependent carboxylation of the covalently attached biotin in the first step and the transfer of the carboxyl group to pyruvate in the second. The sequence is that of Pyruvate carboxylase (PYC) from Pichia angusta (Yeast).